The primary structure comprises 626 residues: UvrABC system protein C (626 aa).

In terms of domain architecture, GIY-YIG spans Pro-26–Val-105. In terms of domain architecture, UVR spans Ser-215–Leu-250.

The protein belongs to the UvrC family. Interacts with UvrB in an incision complex.

The protein localises to the cytoplasm. The UvrABC repair system catalyzes the recognition and processing of DNA lesions. UvrC both incises the 5' and 3' sides of the lesion. The N-terminal half is responsible for the 3' incision and the C-terminal half is responsible for the 5' incision. The chain is UvrABC system protein C from Acaryochloris marina (strain MBIC 11017).